Consider the following 261-residue polypeptide: Cytochrome c oxidase subunit 3 (261 aa).

Residues 1 to 15 (MTHQTHAYHMVNPSP) lie on the Mitochondrial matrix side of the membrane. Residues 16-34 (WPLTGALSALLMTSGLAMW) traverse the membrane as a helical segment. Topologically, residues 35–40 (FHYNLT) are mitochondrial intermembrane. The helical transmembrane segment at 41–66 (LLLTLGMTTNLLTMYQWWRDIIREST) threads the bilayer. The Mitochondrial matrix portion of the chain corresponds to 67 to 72 (FQGHHT). The chain crosses the membrane as a helical span at residues 73–105 (PIVQKGLRYGMILFIISEVFFFAGFFWAFYHSS). The Mitochondrial intermembrane segment spans residues 106–128 (LAPTPELGGCWPPTGIIPLNPLE). The helical transmembrane segment at 129–152 (VPLLNTSVLLASGVSITWAHHSLM) threads the bilayer. Residues 153–155 (EGN) lie on the Mitochondrial matrix side of the membrane. Residues 156–183 (RKHMLQALFITISLGVYFTLLQASEYYE) form a helical membrane-spanning segment. Topologically, residues 184–190 (TSFTISD) are mitochondrial intermembrane. A helical membrane pass occupies residues 191–223 (GVYGSTFFMATGFHGLHVIIGSTFLIVCFLRQL). At 224 to 232 (KYHFTSNHH) the chain is on the mitochondrial matrix side. Residues 233-256 (FGFEAAAWYWHFVDVVWLFLYVSI) form a helical membrane-spanning segment. At 257-261 (YWWGS) the chain is on the mitochondrial intermembrane side.

This sequence belongs to the cytochrome c oxidase subunit 3 family. In terms of assembly, component of the cytochrome c oxidase (complex IV, CIV), a multisubunit enzyme composed of 14 subunits. The complex is composed of a catalytic core of 3 subunits MT-CO1, MT-CO2 and MT-CO3, encoded in the mitochondrial DNA, and 11 supernumerary subunits COX4I, COX5A, COX5B, COX6A, COX6B, COX6C, COX7A, COX7B, COX7C, COX8 and NDUFA4, which are encoded in the nuclear genome. The complex exists as a monomer or a dimer and forms supercomplexes (SCs) in the inner mitochondrial membrane with NADH-ubiquinone oxidoreductase (complex I, CI) and ubiquinol-cytochrome c oxidoreductase (cytochrome b-c1 complex, complex III, CIII), resulting in different assemblies (supercomplex SCI(1)III(2)IV(1) and megacomplex MCI(2)III(2)IV(2)).

The protein resides in the mitochondrion inner membrane. It carries out the reaction 4 Fe(II)-[cytochrome c] + O2 + 8 H(+)(in) = 4 Fe(III)-[cytochrome c] + 2 H2O + 4 H(+)(out). Component of the cytochrome c oxidase, the last enzyme in the mitochondrial electron transport chain which drives oxidative phosphorylation. The respiratory chain contains 3 multisubunit complexes succinate dehydrogenase (complex II, CII), ubiquinol-cytochrome c oxidoreductase (cytochrome b-c1 complex, complex III, CIII) and cytochrome c oxidase (complex IV, CIV), that cooperate to transfer electrons derived from NADH and succinate to molecular oxygen, creating an electrochemical gradient over the inner membrane that drives transmembrane transport and the ATP synthase. Cytochrome c oxidase is the component of the respiratory chain that catalyzes the reduction of oxygen to water. Electrons originating from reduced cytochrome c in the intermembrane space (IMS) are transferred via the dinuclear copper A center (CU(A)) of subunit 2 and heme A of subunit 1 to the active site in subunit 1, a binuclear center (BNC) formed by heme A3 and copper B (CU(B)). The BNC reduces molecular oxygen to 2 water molecules using 4 electrons from cytochrome c in the IMS and 4 protons from the mitochondrial matrix. This Felis catus (Cat) protein is Cytochrome c oxidase subunit 3 (MT-CO3).